Consider the following 416-residue polypeptide: MLLPLIVFLLSVLIHHRIYSSFFLHFYSPQYYMICSRLTLLSSCSWHDFHLKLILLEFASQSTNPVPALHNDPTYEKISRRFHENPEAFADVFARAWFKLLHRDMGPQTRYLGPEVPEEELIWQDPIPAVDYELTDAEIAELKAKILDSGLTVSDLVTTAWASASTFRGSDMRGGANGARIRLAPQKDWEVNQPEQLTKVLTVLEDIQNQLDKKVSIADLIVLGGSAAIEKSAQDAGFDVTVPFALGRGDATQEQTDIESFEVLEPISDGFRNYQKKQYSVSAEELLLDKAQLLNLTAPEMTVLVDGMRVLGTNYNGTQHGVFTDRVGTLTNDFFVNLLDMGVEWKPMDGGLYEARNRKTGEVVRTATRVDLVFGSNSVLRALVEVYAQDDNKEKFVGDFIAAWIKVMNADRFDLD.

A signal peptide spans 1-20 (MLLPLIVFLLSVLIHHRIYS).

It belongs to the peroxidase family. Peroxidase/catalase subfamily. In terms of assembly, homodimer or homotetramer. It depends on heme b as a cofactor. Formation of the three residue Trp-Tyr-Met cross-link is important for the catalase, but not the peroxidase activity of the enzyme.

The catalysed reaction is H2O2 + AH2 = A + 2 H2O. It catalyses the reaction 2 H2O2 = O2 + 2 H2O. Its function is as follows. Bifunctional enzyme with both catalase and broad-spectrum peroxidase activity. The protein is Catalase-peroxidase 2 (katG2) of Alkaliphilus metalliredigens (strain QYMF).